The chain runs to 168 residues: Thiol peroxidase (168 aa).

Residues Pro-19–Ala-168 form the Thioredoxin domain. Cys-61 functions as the Cysteine sulfenic acid (-SOH) intermediate in the catalytic mechanism. Cys-61 and Cys-95 are joined by a disulfide.

This sequence belongs to the peroxiredoxin family. Tpx subfamily. Homodimer.

The enzyme catalyses a hydroperoxide + [thioredoxin]-dithiol = an alcohol + [thioredoxin]-disulfide + H2O. Its function is as follows. Thiol-specific peroxidase that catalyzes the reduction of hydrogen peroxide and organic hydroperoxides to water and alcohols, respectively. Plays a role in cell protection against oxidative stress by detoxifying peroxides. The sequence is that of Thiol peroxidase from Salmonella typhi.